Here is a 100-residue protein sequence, read N- to C-terminus: Small ribosomal subunit protein uS14c (100 aa).

It belongs to the universal ribosomal protein uS14 family. Part of the 30S ribosomal subunit.

Its subcellular location is the plastid. The protein resides in the chloroplast. Its function is as follows. Binds 16S rRNA, required for the assembly of 30S particles. In Helianthus annuus (Common sunflower), this protein is Small ribosomal subunit protein uS14c.